The primary structure comprises 153 residues: UPF0756 membrane protein lwe1581 (153 aa).

The next 4 membrane-spanning stretches (helical) occupy residues 6 to 26 (MLFL…SLII), 54 to 74 (WGVT…QIGF), 80 to 100 (SFKS…SILA), and 117 to 137 (LVFG…GPVI).

The protein belongs to the UPF0756 family.

The protein resides in the cell membrane. The protein is UPF0756 membrane protein lwe1581 of Listeria welshimeri serovar 6b (strain ATCC 35897 / DSM 20650 / CCUG 15529 / CIP 8149 / NCTC 11857 / SLCC 5334 / V8).